The chain runs to 621 residues: Acetolactate synthase (621 aa).

Low complexity predominate over residues 1-19 (MSAPTRRPAPDAPGAAGIA). A disordered region spans residues 1–39 (MSAPTRRPAPDAPGAAGIAPAPPAPAAKPAAGKPKRIGP). Glutamate 89 serves as a coordination point for thiamine diphosphate. FAD contacts are provided by residues arginine 190, 296–317 (HGTVAAVAALQRSDLLIALGTR), and 339–358 (DIDPAEIGKNRHADVPIVGD). The tract at residues 432 to 512 (HDQMWAAQFI…IKVALINNGN (81 aa)) is thiamine pyrophosphate binding. Residues aspartate 483 and asparagine 510 each coordinate Mg(2+).

This sequence belongs to the TPP enzyme family. Mg(2+) serves as cofactor. Thiamine diphosphate is required as a cofactor.

The catalysed reaction is 2 pyruvate + H(+) = (2S)-2-acetolactate + CO2. It functions in the pathway amino-acid biosynthesis; L-isoleucine biosynthesis; L-isoleucine from 2-oxobutanoate: step 1/4. The protein operates within amino-acid biosynthesis; L-valine biosynthesis; L-valine from pyruvate: step 1/4. In Mycobacterium avium, this protein is Acetolactate synthase (ilvB).